The following is a 988-amino-acid chain: Putative disease resistance protein RGA4 (988 aa).

The NB-ARC domain maps to 137-439; it reads AAAATRETGF…MAHGFLLSKG (303 aa). ATP is bound at residue 184–191; that stretch reads GMGGLGKT. LRR repeat units lie at residues 526 to 548, 549 to 572, 574 to 595, 596 to 620, 638 to 662, 674 to 696, 751 to 776, 784 to 808, 829 to 851, 852 to 876, 878 to 900, 901 to 925, 927 to 950, and 966 to 988; these read FVSL…SIGD, LLHL…LCKL, NLQT…QTSK, LSSL…GLLT, LGEL…KNDT, LQSL…EVKV, LPCL…DVHS, FPSL…EGEE, LSSV…SISN, LSTL…MFTS, TNLE…SLTS, LNAL…GLEG, TSLT…LQHL, and KRCD…LDIH.

This sequence belongs to the disease resistance NB-LRR family.

Functionally, disease resistance protein. Resistance proteins guard the plant against pathogens that contain an appropriate avirulence protein via a direct or indirect interaction with this avirulence protein. That triggers a defense system which restricts the pathogen growth. The polypeptide is Putative disease resistance protein RGA4 (RGA4) (Solanum bulbocastanum (Wild potato)).